Reading from the N-terminus, the 91-residue chain is Acylphosphatase (91 aa).

The Acylphosphatase-like domain occupies 4 to 91 (RAIVTIKGLV…GEFDDFDVRY (88 aa)). Residues arginine 19 and asparagine 37 contribute to the active site.

The protein belongs to the acylphosphatase family.

It carries out the reaction an acyl phosphate + H2O = a carboxylate + phosphate + H(+). The polypeptide is Acylphosphatase (acyP) (Geobacter sulfurreducens (strain ATCC 51573 / DSM 12127 / PCA)).